Reading from the N-terminus, the 597-residue chain is Arginine--tRNA ligase (597 aa).

The short motif at 138-148 (ANPTGPMHVGH) is the 'HIGH' region element.

It belongs to the class-I aminoacyl-tRNA synthetase family. In terms of assembly, monomer.

Its subcellular location is the cytoplasm. It carries out the reaction tRNA(Arg) + L-arginine + ATP = L-arginyl-tRNA(Arg) + AMP + diphosphate. This chain is Arginine--tRNA ligase, found in Rhodopseudomonas palustris (strain ATCC BAA-98 / CGA009).